We begin with the raw amino-acid sequence, 674 residues long: DNA ligase (674 aa).

Residues 34-38 (DAEYD), 84-85 (SL), and glutamate 116 each bind NAD(+). Lysine 118 acts as the N6-AMP-lysine intermediate in catalysis. Positions 139, 174, 291, and 315 each coordinate NAD(+). Residues cysteine 409, cysteine 412, cysteine 425, and cysteine 430 each coordinate Zn(2+). Positions 586-674 (RGEEALKGLT…TGKPVETLAS (89 aa)) constitute a BRCT domain.

The protein belongs to the NAD-dependent DNA ligase family. LigA subfamily. Mg(2+) serves as cofactor. It depends on Mn(2+) as a cofactor.

The enzyme catalyses NAD(+) + (deoxyribonucleotide)n-3'-hydroxyl + 5'-phospho-(deoxyribonucleotide)m = (deoxyribonucleotide)n+m + AMP + beta-nicotinamide D-nucleotide.. Its function is as follows. DNA ligase that catalyzes the formation of phosphodiester linkages between 5'-phosphoryl and 3'-hydroxyl groups in double-stranded DNA using NAD as a coenzyme and as the energy source for the reaction. It is essential for DNA replication and repair of damaged DNA. This is DNA ligase from Thermus scotoductus.